The sequence spans 256 residues: Zinc import ATP-binding protein ZnuC (256 aa).

Positions 6–221 (IAAEGLSIRV…PEYRALFGTG (216 aa)) constitute an ABC transporter domain. 38–45 (GPNGSGKS) contacts ATP. The disordered stretch occupies residues 237 to 256 (HDDDCGHDHGAEHMHPHGDR).

Belongs to the ABC transporter superfamily. Zinc importer (TC 3.A.1.15.5) family. The complex is composed of two ATP-binding proteins (ZnuC), two transmembrane proteins (ZnuB) and a solute-binding protein (ZnuA).

It localises to the cell inner membrane. It carries out the reaction Zn(2+)(out) + ATP(in) + H2O(in) = Zn(2+)(in) + ADP(in) + phosphate(in) + H(+)(in). Its function is as follows. Part of the ABC transporter complex ZnuABC involved in zinc import. Responsible for energy coupling to the transport system. The sequence is that of Zinc import ATP-binding protein ZnuC from Ruegeria pomeroyi (strain ATCC 700808 / DSM 15171 / DSS-3) (Silicibacter pomeroyi).